A 250-amino-acid chain; its full sequence is Histone H1.2 (250 aa).

Over residues 1–11 (MSDSAVATSAS) the composition is skewed to polar residues. 2 disordered regions span residues 1 to 53 (MSDS…QMVD) and 101 to 250 (KLIQ…ATKK). Positions 27 to 42 (KKAAATPKSKKSTAAP) are enriched in low complexity. In terms of domain architecture, H15 spans 44 to 118 (SHPPTQQMVD…GASGSFKLSR (75 aa)). Residues 120 to 133 (AKKDPKPKASAVEK) are compositionally biased toward basic and acidic residues. The segment covering 151 to 161 (STSTTKKAAGA) has biased composition (low complexity). Basic and acidic residues predominate over residues 174 to 191 (KSVEKKRADKAKAKDAKK). Over residues 192–211 (TGTIKAKPTTAKAKSSATKP) the composition is skewed to low complexity. Basic residues-rich tracts occupy residues 212–225 (KTPK…KPKK) and 235–250 (TAVK…ATKK).

Belongs to the histone H1/H5 family.

It is found in the nucleus. The protein resides in the chromosome. Functionally, histones H1 are necessary for the condensation of nucleosome chains into higher-order structures. This chain is Histone H1.2 (His1.2), found in Drosophila virilis (Fruit fly).